Consider the following 178-residue polypeptide: Sec-independent protein translocase protein TatB (178 aa).

A helical transmembrane segment spans residues 1–21 (MFDIGWSELVVIAVVALIAIG). Residues 77–86 (TSGNLMTKLT) show a composition bias toward polar residues. Residues 77 to 178 (TSGNLMTKLT…HEAVKDAKAS (102 aa)) form a disordered region. The span at 93–102 (PKLEDLDKPA) shows a compositional bias: basic and acidic residues. The span at 155–165 (HATPEPAPATH) shows a compositional bias: low complexity. A compositionally biased stretch (basic and acidic residues) spans 166–178 (ETPHEAVKDAKAS).

It belongs to the TatB family. In terms of assembly, the Tat system comprises two distinct complexes: a TatABC complex, containing multiple copies of TatA, TatB and TatC subunits, and a separate TatA complex, containing only TatA subunits. Substrates initially bind to the TatABC complex, which probably triggers association of the separate TatA complex to form the active translocon.

The protein localises to the cell inner membrane. Its function is as follows. Part of the twin-arginine translocation (Tat) system that transports large folded proteins containing a characteristic twin-arginine motif in their signal peptide across membranes. Together with TatC, TatB is part of a receptor directly interacting with Tat signal peptides. TatB may form an oligomeric binding site that transiently accommodates folded Tat precursor proteins before their translocation. This is Sec-independent protein translocase protein TatB from Nitrobacter hamburgensis (strain DSM 10229 / NCIMB 13809 / X14).